The chain runs to 366 residues: Chorismate synthase (366 aa).

2 residues coordinate NADP(+): arginine 48 and arginine 54. FMN contacts are provided by residues 125–127 (RSS), 238–239 (NA), glycine 278, 293–297 (KPTSS), and arginine 319.

It belongs to the chorismate synthase family. As to quaternary structure, homotetramer. Requires FMNH2 as cofactor.

The enzyme catalyses 5-O-(1-carboxyvinyl)-3-phosphoshikimate = chorismate + phosphate. It functions in the pathway metabolic intermediate biosynthesis; chorismate biosynthesis; chorismate from D-erythrose 4-phosphate and phosphoenolpyruvate: step 7/7. Its function is as follows. Catalyzes the anti-1,4-elimination of the C-3 phosphate and the C-6 proR hydrogen from 5-enolpyruvylshikimate-3-phosphate (EPSP) to yield chorismate, which is the branch point compound that serves as the starting substrate for the three terminal pathways of aromatic amino acid biosynthesis. This reaction introduces a second double bond into the aromatic ring system. This is Chorismate synthase from Cellvibrio japonicus (strain Ueda107) (Pseudomonas fluorescens subsp. cellulosa).